The primary structure comprises 329 residues: Urease accessory protein UreD 2 (329 aa).

A disordered region spans residues 100–120; sequence YSRPSDSSKFTNGTQSANSNT. The span at 103–120 shows a compositional bias: polar residues; sequence PSDSSKFTNGTQSANSNT.

Belongs to the UreD family. As to quaternary structure, ureD, UreF and UreG form a complex that acts as a GTP-hydrolysis-dependent molecular chaperone, activating the urease apoprotein by helping to assemble the nickel containing metallocenter of UreC. The UreE protein probably delivers the nickel.

The protein resides in the cytoplasm. Required for maturation of urease via the functional incorporation of the urease nickel metallocenter. This is Urease accessory protein UreD 2 from Psychrobacter cryohalolentis (strain ATCC BAA-1226 / DSM 17306 / VKM B-2378 / K5).